Consider the following 101-residue polypeptide: Large ribosomal subunit protein uL23 (101 aa).

It belongs to the universal ribosomal protein uL23 family. As to quaternary structure, part of the 50S ribosomal subunit. Contacts protein L29, and trigger factor when it is bound to the ribosome.

Functionally, one of the early assembly proteins it binds 23S rRNA. One of the proteins that surrounds the polypeptide exit tunnel on the outside of the ribosome. Forms the main docking site for trigger factor binding to the ribosome. This chain is Large ribosomal subunit protein uL23, found in Corynebacterium glutamicum (strain R).